Reading from the N-terminus, the 503-residue chain is MADDEDDIVWIREDTAQSSVPTSPTTPATIIEAAPVLSDAFDKPILKSVETISVSNGPPEVTISAPPPTPPAAPLAPQITPMVLSTVPDAAPAQDIPALILAALAPEPVPEPEPEVEAKQNVIVEKENEIKDQQQNDQLSAKLDPKTPNSVDDNSMSFDISECERKFNTAIREANDILEDFDKKSKQVAENTKFVAKELAELAADAPRVFQKTIEDHSQVPEISELPSGGLPKNVESVLIGEGILEEITGTLVLPTGQVLVTDERVGILLFNLEGDVLAKINPADFRKLWSPVYHKEHILVLADAKNAENHWSRHVIKFTCQLEYVAKIECPSWLAECTILRERLSIAHNDHLYLCVCGEIFSGIYELTPIGQWTELEYKLSEAYIDMLAFATIGPITQLLVVEGRRNYVLLVSVRESRIVDRKRMAICERPGALAKDEAGRLFVSNRFSASIQLVDTMRWVSEKNVAITEAFVRHFTACWGLLAIPLKNAVRLQRYSFRSLR.

Disordered stretches follow at residues 1–26 and 132–156; these read MADD…SPTT and DQQQ…DNSM. A compositionally biased stretch (low complexity) spans 16 to 26; it reads AQSSVPTSPTT. Positions 147–156 are enriched in polar residues; the sequence is TPNSVDDNSM.

This is an uncharacterized protein from Caenorhabditis elegans.